The chain runs to 432 residues: Adenylosuccinate synthetase (432 aa).

Residues glycine 12 to lysine 18 and glycine 40 to threonine 42 each bind GTP. Aspartate 13 functions as the Proton acceptor in the catalytic mechanism. Residues aspartate 13 and glycine 40 each coordinate Mg(2+). Residues aspartate 13–lysine 16, asparagine 38–histidine 41, threonine 132, arginine 146, glutamine 226, threonine 241, and arginine 305 contribute to the IMP site. Residue histidine 41 is the Proton donor of the active site. Position 301-307 (threonine 301–arginine 307) interacts with substrate. GTP is bound by residues arginine 307, lysine 333–aspartate 335, and serine 415–serine 417.

This sequence belongs to the adenylosuccinate synthetase family. As to quaternary structure, homodimer. The cofactor is Mg(2+).

It is found in the cytoplasm. It catalyses the reaction IMP + L-aspartate + GTP = N(6)-(1,2-dicarboxyethyl)-AMP + GDP + phosphate + 2 H(+). The protein operates within purine metabolism; AMP biosynthesis via de novo pathway; AMP from IMP: step 1/2. In terms of biological role, plays an important role in the de novo pathway of purine nucleotide biosynthesis. Catalyzes the first committed step in the biosynthesis of AMP from IMP. The protein is Adenylosuccinate synthetase of Sinorhizobium medicae (strain WSM419) (Ensifer medicae).